Reading from the N-terminus, the 558-residue chain is Dihydroxy-acid dehydratase (558 aa).

C49 serves as a coordination point for [2Fe-2S] cluster. D81 is a binding site for Mg(2+). C122 lines the [2Fe-2S] cluster pocket. Mg(2+) is bound by residues D123 and K124. K124 is subject to N6-carboxylysine. C194 is a [2Fe-2S] cluster binding site. E446 serves as a coordination point for Mg(2+). The Proton acceptor role is filled by S472.

It belongs to the IlvD/Edd family. In terms of assembly, homodimer. Requires [2Fe-2S] cluster as cofactor. Mg(2+) is required as a cofactor.

The catalysed reaction is (2R)-2,3-dihydroxy-3-methylbutanoate = 3-methyl-2-oxobutanoate + H2O. The enzyme catalyses (2R,3R)-2,3-dihydroxy-3-methylpentanoate = (S)-3-methyl-2-oxopentanoate + H2O. The protein operates within amino-acid biosynthesis; L-isoleucine biosynthesis; L-isoleucine from 2-oxobutanoate: step 3/4. Its pathway is amino-acid biosynthesis; L-valine biosynthesis; L-valine from pyruvate: step 3/4. Functionally, functions in the biosynthesis of branched-chain amino acids. Catalyzes the dehydration of (2R,3R)-2,3-dihydroxy-3-methylpentanoate (2,3-dihydroxy-3-methylvalerate) into 2-oxo-3-methylpentanoate (2-oxo-3-methylvalerate) and of (2R)-2,3-dihydroxy-3-methylbutanoate (2,3-dihydroxyisovalerate) into 2-oxo-3-methylbutanoate (2-oxoisovalerate), the penultimate precursor to L-isoleucine and L-valine, respectively. This Synechococcus sp. (strain RCC307) protein is Dihydroxy-acid dehydratase.